A 383-amino-acid chain; its full sequence is Succinyl-diaminopimelate desuccinylase (383 aa).

A Zn(2+)-binding site is contributed by His-79. Residue Asp-81 is part of the active site. Position 110 (Asp-110) interacts with Zn(2+). Glu-141 acts as the Proton acceptor in catalysis. Zn(2+)-binding residues include Glu-142, Glu-170, and His-355.

This sequence belongs to the peptidase M20A family. DapE subfamily. Homodimer. The cofactor is Zn(2+). Co(2+) is required as a cofactor.

The catalysed reaction is N-succinyl-(2S,6S)-2,6-diaminopimelate + H2O = (2S,6S)-2,6-diaminopimelate + succinate. It participates in amino-acid biosynthesis; L-lysine biosynthesis via DAP pathway; LL-2,6-diaminopimelate from (S)-tetrahydrodipicolinate (succinylase route): step 3/3. In terms of biological role, catalyzes the hydrolysis of N-succinyl-L,L-diaminopimelic acid (SDAP), forming succinate and LL-2,6-diaminopimelate (DAP), an intermediate involved in the bacterial biosynthesis of lysine and meso-diaminopimelic acid, an essential component of bacterial cell walls. This is Succinyl-diaminopimelate desuccinylase from Helicobacter pylori (strain Shi470).